The sequence spans 535 residues: Beta-glucosidase 47 (535 aa).

The N-terminal stretch at 1–38 (MKKSIVYEIMETKSSMYLSQFRLWLCFIITTLVSLSSS) is a signal peptide. Q73 serves as a coordination point for a beta-D-glucoside. N93 is a glycosylation site (N-linked (GlcNAc...) asparagine). Residues H175 and 220–221 (NE) contribute to the a beta-D-glucoside site. The active-site Proton donor is E221. Residues C240 and C247 are joined by a disulfide bond. Residue N246 is glycosylated (N-linked (GlcNAc...) asparagine). Y363 contributes to the a beta-D-glucoside binding site. The cysteines at positions 371 and 376 are disulfide-linked. A glycan (N-linked (GlcNAc...) asparagine) is linked at N419. E426 serves as a coordination point for a beta-D-glucoside. E426 acts as the Nucleophile in catalysis. N432 carries N-linked (GlcNAc...) asparagine glycosylation. A beta-D-glucoside contacts are provided by residues W470, 477–478 (EW), and F486.

It belongs to the glycosyl hydrolase 1 family.

It carries out the reaction Hydrolysis of terminal, non-reducing beta-D-glucosyl residues with release of beta-D-glucose.. The polypeptide is Beta-glucosidase 47 (Arabidopsis thaliana (Mouse-ear cress)).